Here is a 287-residue protein sequence, read N- to C-terminus: ATP synthase gamma chain (287 aa).

This sequence belongs to the ATPase gamma chain family. As to quaternary structure, F-type ATPases have 2 components, CF(1) - the catalytic core - and CF(0) - the membrane proton channel. CF(1) has five subunits: alpha(3), beta(3), gamma(1), delta(1), epsilon(1). CF(0) has three main subunits: a, b and c.

The protein localises to the cell inner membrane. Produces ATP from ADP in the presence of a proton gradient across the membrane. The gamma chain is believed to be important in regulating ATPase activity and the flow of protons through the CF(0) complex. The sequence is that of ATP synthase gamma chain from Sodalis glossinidius (strain morsitans).